Reading from the N-terminus, the 65-residue chain is DNA gyrase inhibitor YacG (65 aa).

Cysteine 9, cysteine 12, cysteine 28, and cysteine 32 together coordinate Zn(2+). The interval 43–65 is disordered; the sequence is EEKRIPSQSENSDSDDWSGQPEQ.

The protein belongs to the DNA gyrase inhibitor YacG family. Interacts with GyrB. Zn(2+) is required as a cofactor.

Functionally, inhibits all the catalytic activities of DNA gyrase by preventing its interaction with DNA. Acts by binding directly to the C-terminal domain of GyrB, which probably disrupts DNA binding by the gyrase. The polypeptide is DNA gyrase inhibitor YacG (Photorhabdus laumondii subsp. laumondii (strain DSM 15139 / CIP 105565 / TT01) (Photorhabdus luminescens subsp. laumondii)).